The primary structure comprises 347 residues: NADH-ubiquinone oxidoreductase chain 2 (347 aa).

10 helical membrane-spanning segments follow: residues 13 to 33 (IFTGTLITALSSHWFFTWVGL), 60 to 80 (FLTQATASMILLMAILSNSML), 96 to 116 (LMIMMAMAMKLGMAPFHFWVP), 123 to 143 (PLMSGLLLLTWQKLAPISIMY), 149 to 169 (LNVNLLLTLSILSIMAGSWGG), 178 to 198 (ILAYSSITHMGWMMAVLPYNP), 201 to 221 (TILNLTIYIILTTTAFLLLNL), 247 to 267 (TLLSLGGLPPLTGFLPKWVII), 274 to 294 (NSLIIPTIMAIITLLNLYFYL), and 326 to 346 (LPTLITLTTLLLPISPFMLMI).

It belongs to the complex I subunit 2 family. Core subunit of respiratory chain NADH dehydrogenase (Complex I) which is composed of 45 different subunits. Interacts with TMEM242.

Its subcellular location is the mitochondrion inner membrane. The catalysed reaction is a ubiquinone + NADH + 5 H(+)(in) = a ubiquinol + NAD(+) + 4 H(+)(out). Functionally, core subunit of the mitochondrial membrane respiratory chain NADH dehydrogenase (Complex I) which catalyzes electron transfer from NADH through the respiratory chain, using ubiquinone as an electron acceptor. Essential for the catalytic activity and assembly of complex I. In Pan troglodytes (Chimpanzee), this protein is NADH-ubiquinone oxidoreductase chain 2.